The following is a 651-amino-acid chain: p-hydroxybenzoic acid efflux pump subunit AaeB (651 aa).

A run of 11 helical transmembrane segments spans residues 11-31 (FAFK…HLQL), 41-61 (AAIV…SGAI), 67-87 (LRII…VLTI), 91-111 (VLTL…SSLV), 119-139 (FGLA…TPLL), 150-170 (EIVL…PRSI), 368-388 (LFWL…IAVV), 405-425 (FLVG…FIIP), 429-449 (QSML…GIEV), 455-475 (GSLG…PMIF), and 481-501 (LDSA…LLLI).

This sequence belongs to the aromatic acid exporter ArAE (TC 2.A.85) family.

It is found in the cell inner membrane. Forms an efflux pump with AaeA. Could function as a metabolic relief valve, allowing to eliminate certain compounds when they accumulate to high levels in the cell. The sequence is that of p-hydroxybenzoic acid efflux pump subunit AaeB from Yersinia pseudotuberculosis serotype O:1b (strain IP 31758).